A 364-amino-acid polypeptide reads, in one-letter code: 3-isopropylmalate dehydrogenase (364 aa).

Gly76 to Glu89 contributes to the NAD(+) binding site. The substrate site is built by Arg96, Arg106, Arg134, and Asp223. Positions 223, 247, and 251 each coordinate Mg(2+). Residue Gly281–Asn293 coordinates NAD(+).

This sequence belongs to the isocitrate and isopropylmalate dehydrogenases family. LeuB type 1 subfamily. Homodimer. Requires Mg(2+) as cofactor. Mn(2+) serves as cofactor.

It is found in the cytoplasm. The catalysed reaction is (2R,3S)-3-isopropylmalate + NAD(+) = 4-methyl-2-oxopentanoate + CO2 + NADH. Its pathway is amino-acid biosynthesis; L-leucine biosynthesis; L-leucine from 3-methyl-2-oxobutanoate: step 3/4. In terms of biological role, catalyzes the oxidation of 3-carboxy-2-hydroxy-4-methylpentanoate (3-isopropylmalate) to 3-carboxy-4-methyl-2-oxopentanoate. The product decarboxylates to 4-methyl-2 oxopentanoate. This is 3-isopropylmalate dehydrogenase from Shouchella clausii (strain KSM-K16) (Alkalihalobacillus clausii).